The chain runs to 122 residues: Vacuolar transporter chaperone complex subunit 1 (122 aa).

Topologically, residues 1–32 are cytoplasmic; the sequence is MSTQPLLQTTPGKRIALPVRVEPKVFFANERT. A helical transmembrane segment spans residues 33–53; that stretch reads FLSWLSFAVVLGGLSVGLLNF. Over 54–59 the chain is Vacuolar; that stretch reads GDRIGK. The helical transmembrane segment at 60–80 threads the bilayer; sequence ISAGLFTIVAIGTMGYALGIY. At 81 to 101 the chain is on the cytoplasmic side; sequence HWRASAIRRRGSGPYDDRLGP. The chain crosses the membrane as a helical span at residues 102–122; the sequence is TILCFVLLAAIITNFVLRMLF.

This sequence belongs to the VTC1 family. In terms of assembly, the VTC core complex is an integral membrane heterooligomer composed of at least the catalytic subunit vtc4 and the accessory subunits vtc1 and vtc2. vtc1 is a small membrane protein without hydrophilic domain. Vtc2 and vtc4 are related and have 2 hydrophilic domains that face the cytosol, an N-terminal SPX domain and the central core domain. The central core in vtc4 is the catalytic domain. Vtc1 interacts with GTP-bound Ras-like cdc42, which is subsequently inactivated.

The protein localises to the vacuole membrane. In terms of biological role, accessory subunit of the vacuolar transporter chaperone (VTC) complex. The VTC complex acts as a vacuolar polyphosphate polymerase that catalyzes the synthesis of inorganic polyphosphate (polyP) via transfer of phosphate from ATP to a growing polyP chain, releasing ADP. VTC exposes its catalytic domain vtc4 to the cytosol, where the growing polyP chain winds through a tunnel-shaped pocket, integrating cytoplasmic polymer synthesis with polyP membrane translocation. The VTC complex carries 9 vacuolar transmembrane domains, which are likely to constitute the translocation channel into the organelle lumen. PolyP synthesis is tightly coupled to its transport into the vacuole lumen, in order to avoid otherwise toxic intermediates in the cytosol, and it depends on the proton gradient across the membrane, formed by V-ATPase. Vtc1 contributes only 3 transmembrane domains to the complex. The VTC complex also plays a role in vacuolar membrane fusion. Involved in the control of cell polarity. The protein is Vacuolar transporter chaperone complex subunit 1 of Schizosaccharomyces pombe (strain 972 / ATCC 24843) (Fission yeast).